We begin with the raw amino-acid sequence, 171 residues long: MPLLDSFTVDHTRMEAPAVRVAKTMHTPSGDAITVFDLRFCVPNKEVMPEKGIHTLEHLFAGFMRDHLNGNGVEIIDISPMGCRTGFYMSLIGTPEETRVADAWKAAMADVLKVKEQNQIPELNVYQCGTYHMHSLEEAQEIARHILDRDVRVNSNEELALPKETLKELHI.

The Fe cation site is built by histidine 54, histidine 58, and cysteine 128.

This sequence belongs to the LuxS family. As to quaternary structure, homodimer. It depends on Fe cation as a cofactor.

The enzyme catalyses S-(5-deoxy-D-ribos-5-yl)-L-homocysteine = (S)-4,5-dihydroxypentane-2,3-dione + L-homocysteine. In terms of biological role, involved in the synthesis of autoinducer 2 (AI-2) which is secreted by bacteria and is used to communicate both the cell density and the metabolic potential of the environment. The regulation of gene expression in response to changes in cell density is called quorum sensing. Catalyzes the transformation of S-ribosylhomocysteine (RHC) to homocysteine (HC) and 4,5-dihydroxy-2,3-pentadione (DPD). The polypeptide is S-ribosylhomocysteine lyase (Enterobacter sp. (strain 638)).